The primary structure comprises 363 residues: L-serine dehydratase/L-threonine deaminase (363 aa).

Ala2 carries the post-translational modification N-acetylalanine. Lys41 carries the post-translational modification N6-(pyridoxal phosphate)lysine. The disordered stretch occupies residues 74–98 (RGRSHSGDEQPHVRSQALLPDTPSP). Pyridoxal 5'-phosphate is bound at residue Pro164.

The protein belongs to the serine/threonine dehydratase family. As to quaternary structure, homodimer. Pyridoxal 5'-phosphate is required as a cofactor. As to expression, predominantly expressed in the periportal regions of the liver.

Its subcellular location is the cytoplasm. The enzyme catalyses L-serine = pyruvate + NH4(+). It catalyses the reaction L-threonine = 2-oxobutanoate + NH4(+). It functions in the pathway carbohydrate biosynthesis; gluconeogenesis. Functionally, catalyzes the pyridoxal-phosphate-dependent dehydrative deamination of L-threonine and L-serine to ammonia and alpha-ketobutyrate and pyruvate, respectively. The polypeptide is L-serine dehydratase/L-threonine deaminase (Sds) (Rattus norvegicus (Rat)).